The primary structure comprises 65 residues: Large ribosomal subunit protein bL33c (65 aa).

It belongs to the bacterial ribosomal protein bL33 family.

The protein localises to the plastid. It localises to the chloroplast. The sequence is that of Large ribosomal subunit protein bL33c from Chaetosphaeridium globosum (Charophycean green alga).